A 299-amino-acid chain; its full sequence is Non-structural protein V (299 aa).

The tract at residues 40–91 (SDNPGQERATYKEEKAGGSGLSKPCLSAIGSTEGGAPRIRGQGSGESDDDTE) is disordered. Residues 110–120 (HYVYDHSGEAV) form an interaction with host STAT1 region. Residues 133-163 (SGLDGDSTLSEGDNESENSDVDIGEPDTEGY) form a disordered region. Residues 144 to 160 (GDNESENSDVDIGEPDT) show a composition bias toward acidic residues. Zn(2+)-binding residues include H232, C251, C255, C267, C269, C272, C276, and C279.

It belongs to the paramyxoviruses V protein family. In terms of assembly, interacts with host IFIH1/MDA5 and DHX58/LGP2; these interactions are involved in the inhibition of the host type I interferon signaling pathway. Interacts with host TYK2; this interaction inhibits the type I interferon signaling pathway without affecting the type II pathway. Interacts with host IRF7; this interaction inhibits IRF7 translocation to the nucleus. Interacts with host CHUK. Interacts with host RELA/p65; this interaction inhibits the nuclear translocation of NF-KappaB. Interacts (via N-terminus) with host STAT1 and JAK1; these interactions inhibit STAT1 phosphorylation by Jak1 and thereby the type I interferon signaling pathway. Interacts (via C-terminus) with host STAT2; this interaction is involved in the inhibition of the host type I interferon signaling pathway. Forms a complex with host PPP1CA and PPP1CC; this interaction prevents dephosphorylation of host IFIH1/MDA5 and leads to the inhibition of the host type I interferon signaling pathway. Interacts with host IRF9; this interaction prevents the binding of IRF9 to STAT2 and thereby the type I interferon signaling pathway. Interacts with host RIGI regulatory protein (via CARDs domain) and host TRIM25 (via SPRY domain); these interactions prevent TRIM25-mediated ubiquitination of RIG-I and disrupts downstream RIG-I signaling.

The protein resides in the host cytoplasm. In terms of biological role, plays an essential role in the inhibition of host immune response. Prevents the establishment of cellular antiviral state by blocking interferon-alpha/beta (IFN-alpha/beta) production and signaling pathway. Interacts with host IFIH1/MDA5 and DHX58/LGP2 to inhibit the transduction pathway involved in the activation of IFN-beta promoter, thus protecting the virus against cell antiviral state. Blocks the type I interferon signaling pathway by interacting with host TYK2 and thereby inhibiting downstream STAT1 and STAT2 phosphorylation. Blocks the type I interferon signaling pathway by disrupting the RIG-I signaling pathway. Moderately affects the type II interferon signaling. Prevents PP1alpha/gamma-mediated dephosphorylation of host IFIH1/MDA5 and thus blocks its activation. The sequence is that of Non-structural protein V (P/V) from Homo sapiens (Human).